A 697-amino-acid polypeptide reads, in one-letter code: Phosphatase and actin regulator 4-B (697 aa).

The RPEL 1 repeat unit spans residues 42 to 67; the sequence is EVLERKISMRKPREELVKRGLIVDVP. Disordered stretches follow at residues 63-381 and 450-569; these read IVDV…LTLA and LKVP…SKDE. Residues 189–202 show a composition bias toward basic and acidic residues; it reads HVPEKTSEKYRPKS. Composition is skewed to pro residues over residues 317–326 and 370–380; these read PSPPLPPKRA and APNPPVPPLTL. Acidic residues-rich tracts occupy residues 454-469, 501-514, and 522-532; these read DDDDDEDELSLEDESL, QEEDEEEGVSDTDS, and EEDEDEEEEET. 2 RPEL repeats span residues 579 to 604 and 616 to 641; these read TQLNRRLSQRPTAEELEQRNILQKNE and RRLTRKLSQRPTVAELLERKILRFNE.

The protein belongs to the phosphatase and actin regulator family. In terms of assembly, binds ppp1ca and actin.

Its subcellular location is the cytoplasm. It localises to the cell projection. The protein resides in the lamellipodium. Its function is as follows. Regulator of protein phosphatase 1 (PP1) required for neural tube and optic fissure closure, and enteric neural crest cell (ENCCs) migration during development. Acts as an activator of PP1. During neural tube closure, localizes to the ventral neural tube and activates PP1, leading to down-regulate cell proliferation within cranial neural tissue and the neural retina. Also acts as a regulator of migration of enteric neural crest cells (ENCCs) by activating PP1, leading to repression of the integrin signaling through the rho/rock pathway. The protein is Phosphatase and actin regulator 4-B (phactr4-b) of Xenopus laevis (African clawed frog).